A 91-amino-acid polypeptide reads, in one-letter code: N(2)-fixation sustaining protein CowN (91 aa).

This sequence belongs to the CowN family.

Its function is as follows. Is required to sustain N(2)-dependent growth in the presence of low levels of carbon monoxide (CO). Probably acts by protecting the N(2) fixation ability of the nitrogenase complex, which is inactivated in the presence of CO. The sequence is that of N(2)-fixation sustaining protein CowN from Beijerinckia indica subsp. indica (strain ATCC 9039 / DSM 1715 / NCIMB 8712).